The following is a 637-amino-acid chain: Poly(A) polymerase beta (637 aa).

A compositionally biased stretch (low complexity) spans 1–10; it reads MMPFPVTTQG. The segment at 1-23 is disordered; that stretch reads MMPFPVTTQGPPQPAPPPNRYGV. ATP contacts are provided by residues 101–103, T110, 114–116, D168, K229, Y238, and 247–248; these read FGS, DID, and GV. Mg(2+)-binding residues include D114, D116, and D168. A disordered region spans residues 535–555; sequence SVPSSTSTMKTGPLISSSQGR.

The protein belongs to the poly(A) polymerase family. Interacts with GSG1. Requires Mg(2+) as cofactor. It depends on Mn(2+) as a cofactor. Testis specific.

It localises to the nucleus. It catalyses the reaction RNA(n) + ATP = RNA(n)-3'-adenine ribonucleotide + diphosphate. In Homo sapiens (Human), this protein is Poly(A) polymerase beta.